The primary structure comprises 60 residues: Large ribosomal subunit protein bL32 (60 aa).

It belongs to the bacterial ribosomal protein bL32 family.

The chain is Large ribosomal subunit protein bL32 from Streptococcus equi subsp. zooepidemicus (strain MGCS10565).